Consider the following 383-residue polypeptide: tRNA (guanine(26)-N(2))-dimethyltransferase (383 aa).

In terms of domain architecture, Trm1 methyltransferase spans 4–371 (EIITEGRTPL…ASPEEFEAVL (368 aa)). S-adenosyl-L-methionine-binding residues include R38, R63, D80, D108, and A109. C243, C246, C258, and C261 together coordinate Zn(2+).

It belongs to the class I-like SAM-binding methyltransferase superfamily. Trm1 family.

It catalyses the reaction guanosine(26) in tRNA + 2 S-adenosyl-L-methionine = N(2)-dimethylguanosine(26) in tRNA + 2 S-adenosyl-L-homocysteine + 2 H(+). Functionally, dimethylates a single guanine residue at position 26 of a number of tRNAs using S-adenosyl-L-methionine as donor of the methyl groups. This Methanopyrus kandleri (strain AV19 / DSM 6324 / JCM 9639 / NBRC 100938) protein is tRNA (guanine(26)-N(2))-dimethyltransferase.